The primary structure comprises 444 residues: tRNA-2-methylthio-N(6)-dimethylallyladenosine synthase (444 aa).

An MTTase N-terminal domain is found at 6 to 124; it reads KTFKIITYGC…LPQLIEEIKA (119 aa). Cys-15, Cys-51, Cys-85, Cys-161, Cys-165, and Cys-168 together coordinate [4Fe-4S] cluster. The Radical SAM core domain occupies 147–377; sequence RARGAQAFVT…MELQNSISLA (231 aa). One can recognise a TRAM domain in the interval 380–443; that stretch reads EALVGQEVEV…TWLLKGEMVD (64 aa).

This sequence belongs to the methylthiotransferase family. MiaB subfamily. As to quaternary structure, monomer. Requires [4Fe-4S] cluster as cofactor.

It localises to the cytoplasm. It catalyses the reaction N(6)-dimethylallyladenosine(37) in tRNA + (sulfur carrier)-SH + AH2 + 2 S-adenosyl-L-methionine = 2-methylsulfanyl-N(6)-dimethylallyladenosine(37) in tRNA + (sulfur carrier)-H + 5'-deoxyadenosine + L-methionine + A + S-adenosyl-L-homocysteine + 2 H(+). Its function is as follows. Catalyzes the methylthiolation of N6-(dimethylallyl)adenosine (i(6)A), leading to the formation of 2-methylthio-N6-(dimethylallyl)adenosine (ms(2)i(6)A) at position 37 in tRNAs that read codons beginning with uridine. The sequence is that of tRNA-2-methylthio-N(6)-dimethylallyladenosine synthase from Moorella thermoacetica (strain ATCC 39073 / JCM 9320).